Consider the following 364-residue polypeptide: D-alanine--D-alanine ligase (364 aa).

The 207-residue stretch at 146–352 (KLCAMNAGIA…FAELVEKLLL (207 aa)) folds into the ATP-grasp domain. 179 to 234 (TKRFDWPLFVKPASLGSSVGISKVRNAEELAAALENACGLDSKALVEAAISGREIE) contributes to the ATP binding site. Mg(2+)-binding residues include D305, E319, and N321.

It belongs to the D-alanine--D-alanine ligase family. The cofactor is Mg(2+). It depends on Mn(2+) as a cofactor.

It is found in the cytoplasm. It catalyses the reaction 2 D-alanine + ATP = D-alanyl-D-alanine + ADP + phosphate + H(+). Its pathway is cell wall biogenesis; peptidoglycan biosynthesis. Its function is as follows. Cell wall formation. This chain is D-alanine--D-alanine ligase, found in Chlorobaculum tepidum (strain ATCC 49652 / DSM 12025 / NBRC 103806 / TLS) (Chlorobium tepidum).